Here is a 151-residue protein sequence, read N- to C-terminus: Probable transport accessory protein MmpS1 (151 aa).

Transmembrane regions (helical) follow at residues 8–28 (FWIP…VSRL) and 81–101 (VVNA…AVVA).

This sequence belongs to the MmpS family.

It is found in the cell membrane. This chain is Probable transport accessory protein MmpS1 (mmpS1), found in Mycobacterium tuberculosis (strain CDC 1551 / Oshkosh).